The following is a 488-amino-acid chain: uncharacterized protein (488 aa).

27–38 (IVHFGFGAFHRA) lines the NAD(+) pocket.

This sequence belongs to the mannitol dehydrogenase family. UxuB subfamily.

This is an uncharacterized protein from Escherichia coli (strain K12).